The following is a 364-amino-acid chain: Mitogen-activated protein kinase 11 (364 aa).

Residues leucine 24–phenylalanine 308 enclose the Protein kinase domain. ATP-binding positions include valine 30–valine 38 and lysine 53. Nilotinib is bound at residue glutamate 71. Catalysis depends on aspartate 150, which acts as the Proton acceptor. Threonine 180 carries the post-translational modification Phosphothreonine; by MAP2K3, MAP2K4 and MAP2K6. Residues threonine 180–tyrosine 182 carry the TXY motif. A Phosphotyrosine; by MAP2K3, MAP2K4 and MAP2K6 modification is found at tyrosine 182. Disordered stretches follow at residues tyrosine 311–glutamate 331 and glutamine 343–glutamine 364. The span at proline 314 to serine 326 shows a compositional bias: acidic residues. Tyrosine 323 is modified (phosphotyrosine; by ZAP70).

The protein belongs to the protein kinase superfamily. CMGC Ser/Thr protein kinase family. MAP kinase subfamily. Interacts with HDAC3 and DUSP16. Requires Mg(2+) as cofactor. Post-translationally, dually phosphorylated on Thr-180 and Tyr-182 by MAP2K3/MKK3, MAP2K4/MKK4 and MAP2K6/MKK6, which activates the enzyme. As to expression, highest levels in the brain and heart. Also expressed in the placenta, lung, liver, skeletal muscle, kidney and pancreas.

It is found in the cytoplasm. It localises to the nucleus. It carries out the reaction L-seryl-[protein] + ATP = O-phospho-L-seryl-[protein] + ADP + H(+). The catalysed reaction is L-threonyl-[protein] + ATP = O-phospho-L-threonyl-[protein] + ADP + H(+). With respect to regulation, activated by phosphorylation on threonine and tyrosine by MAP2K3/MKK3, MAP2K4/MKK4 and MAP2K6/MKK6. MAP2K3/MKK3 and MAP2K6/MKK6 are both essential for the activation of MAPK11 induced by environmental stress. HDAC3 interacts directly and selectively with MAPK11 to repress ATF2 transcriptional activity, and regulate TNF gene expression in LPS-stimulated cells. Inhibited by SB203580 and pyridinyl-imidazole related compounds. Its function is as follows. Serine/threonine kinase which acts as an essential component of the MAP kinase signal transduction pathway. MAPK11 is one of the four p38 MAPKs which play an important role in the cascades of cellular responses evoked by extracellular stimuli such as pro-inflammatory cytokines or physical stress leading to direct activation of transcription factors. Accordingly, p38 MAPKs phosphorylate a broad range of proteins and it has been estimated that they may have approximately 200 to 300 substrates each. MAPK11 functions are mostly redundant with those of MAPK14. Some of the targets are downstream kinases which are activated through phosphorylation and further phosphorylate additional targets. RPS6KA5/MSK1 and RPS6KA4/MSK2 can directly phosphorylate and activate transcription factors such as CREB1, ATF1, the NF-kappa-B isoform RELA/NFKB3, STAT1 and STAT3, but can also phosphorylate histone H3 and the nucleosomal protein HMGN1. RPS6KA5/MSK1 and RPS6KA4/MSK2 play important roles in the rapid induction of immediate-early genes in response to stress or mitogenic stimuli, either by inducing chromatin remodeling or by recruiting the transcription machinery. On the other hand, two other kinase targets, MAPKAPK2/MK2 and MAPKAPK3/MK3, participate in the control of gene expression mostly at the post-transcriptional level, by phosphorylating ZFP36 (tristetraprolin) and ELAVL1, and by regulating EEF2K, which is important for the elongation of mRNA during translation. MKNK1/MNK1 and MKNK2/MNK2, two other kinases activated by p38 MAPKs, regulate protein synthesis by phosphorylating the initiation factor EIF4E2. In the cytoplasm, the p38 MAPK pathway is an important regulator of protein turnover. For example, CFLAR is an inhibitor of TNF-induced apoptosis whose proteasome-mediated degradation is regulated by p38 MAPK phosphorylation. Ectodomain shedding of transmembrane proteins is regulated by p38 MAPKs as well. In response to inflammatory stimuli, p38 MAPKs phosphorylate the membrane-associated metalloprotease ADAM17. Such phosphorylation is required for ADAM17-mediated ectodomain shedding of TGF-alpha family ligands, which results in the activation of EGFR signaling and cell proliferation. Additional examples of p38 MAPK substrates are the FGFR1. FGFR1 can be translocated from the extracellular space into the cytosol and nucleus of target cells, and regulates processes such as rRNA synthesis and cell growth. FGFR1 translocation requires p38 MAPK activation. In the nucleus, many transcription factors are phosphorylated and activated by p38 MAPKs in response to different stimuli. Classical examples include ATF1, ATF2, ATF6, ELK1, PTPRH, DDIT3, TP53/p53 and MEF2C and MEF2A. The p38 MAPKs are emerging as important modulators of gene expression by regulating chromatin modifiers and remodelers. The promoters of several genes involved in the inflammatory response, such as IL6, IL8 and IL12B, display a p38 MAPK-dependent enrichment of histone H3 phosphorylation on 'Ser-10' (H3S10ph) in LPS-stimulated myeloid cells. This phosphorylation enhances the accessibility of the cryptic NF-kappa-B-binding sites marking promoters for increased NF-kappa-B recruitment. Phosphorylates NLRP1 downstream of MAP3K20/ZAK in response to UV-B irradiation and ribosome collisions, promoting activation of the NLRP1 inflammasome and pyroptosis. Phosphorylates methyltransferase DOT1L on 'Ser-834', 'Thr-900', 'Ser-902', 'Thr-984', 'Ser-1001', 'Ser-1009' and 'Ser-1104'. This chain is Mitogen-activated protein kinase 11 (MAPK11), found in Homo sapiens (Human).